The following is a 328-amino-acid chain: m7GpppN-mRNA hydrolase NUDT17 (328 aa).

The region spanning 90–236 (GVDLGVAVIL…DGTETPGLLP (147 aa)) is the Nudix hydrolase domain. The Nudix box signature appears at 127-148 (GHVELEEELLDGGLRELWEESG). Mg(2+)-binding residues include E142 and E146. The tract at residues 299 to 328 (PCKSAAYLDPGPAKEEWNMDPLPPNQGSGK) is disordered.

Belongs to the Nudix hydrolase family. The cofactor is Mg(2+). Requires Mn(2+) as cofactor.

It carries out the reaction a 5'-end (N(7)-methyl 5'-triphosphoguanosine)-ribonucleoside in mRNA + H2O = N(7)-methyl-GDP + a 5'-end phospho-ribonucleoside in mRNA + 2 H(+). Functionally, acts as a decapping enzyme capable of hydrolyzing monomethylated capped RNAs (in vitro). Hydrolyzes monomethylated capped RNA after alpha and beta phosphates to form N(7)-methyl-GDP. Shows low activity towards unmethylated capped RNA. The polypeptide is m7GpppN-mRNA hydrolase NUDT17 (NUDT17) (Homo sapiens (Human)).